The sequence spans 878 residues: Phosphoenolpyruvate carboxylase (878 aa).

Residues His137 and Lys545 contribute to the active site.

The protein belongs to the PEPCase type 1 family. Mg(2+) is required as a cofactor.

It carries out the reaction oxaloacetate + phosphate = phosphoenolpyruvate + hydrogencarbonate. In terms of biological role, forms oxaloacetate, a four-carbon dicarboxylic acid source for the tricarboxylic acid cycle. The protein is Phosphoenolpyruvate carboxylase of Yersinia pseudotuberculosis serotype O:1b (strain IP 31758).